We begin with the raw amino-acid sequence, 163 residues long: HTH-type transcriptional regulator IscR (163 aa).

The HTH rrf2-type domain maps to 2–131 (RLTSKGRYAV…NNITLGELVN (130 aa)). The segment at residues 28–51 (LADISERQGISLSYLEQLFSRLRK) is a DNA-binding region (H-T-H motif). 3 residues coordinate [2Fe-2S] cluster: C92, C98, and C104. The span at 140-149 (DRQHTHDAPR) shows a compositional bias: basic and acidic residues. The segment at 140 to 163 (DRQHTHDAPRSTRTQDAIDVKLRA) is disordered.

[2Fe-2S] cluster serves as cofactor.

Functionally, regulates the transcription of several operons and genes involved in the biogenesis of Fe-S clusters and Fe-S-containing proteins. This is HTH-type transcriptional regulator IscR from Citrobacter koseri (strain ATCC BAA-895 / CDC 4225-83 / SGSC4696).